The chain runs to 301 residues: RNA polymerase II holoenzyme cyclin-like subunit (301 aa).

One can recognise a Cyclin N-terminal domain in the interval 53–142; the sequence is QQLIKLGKRM…LGECEFALIS (90 aa).

It belongs to the cyclin family. Cyclin C subfamily. In terms of assembly, component of the srb8-11 complex, a regulatory module of the Mediator complex.

Its subcellular location is the nucleus. In terms of biological role, component of the srb8-11 complex. The srb8-11 complex is a regulatory module of the Mediator complex which is itself involved in regulation of basal and activated RNA polymerase II-dependent transcription. The srb8-11 complex may be involved in the transcriptional repression of a subset of genes regulated by Mediator. It may inhibit the association of the Mediator complex with RNA polymerase II to form the holoenzyme complex. The srb8-11 complex phosphorylates the C-terminal domain (CTD) of the largest subunit of RNA polymerase II. This Aspergillus oryzae (strain ATCC 42149 / RIB 40) (Yellow koji mold) protein is RNA polymerase II holoenzyme cyclin-like subunit (ssn8).